Reading from the N-terminus, the 487-residue chain is Lysophospholipid acyltransferase 5 (487 aa).

N-acetylalanine is present on A2. The next 6 membrane-spanning stretches (helical) occupy residues 44 to 64 (LIIS…YLFY), 84 to 104 (FNFG…FLIL), 111 to 131 (ITAV…GYYY), 180 to 200 (GVPS…FLVG), 227 to 247 (IIPA…YTLL), and 285 to 305 (VTCW…FNGF). Residues N338 and H374 contribute to the active site. The next 3 membrane-spanning stretches (helical) occupy residues 364-384 (GLSL…LVCF), 422-442 (LVQQ…FCLF), and 453-473 (SIYF…PYIH). Positions 484–487 (KKME) match the Di-lysine motif motif.

This sequence belongs to the membrane-bound acyltransferase family. As to expression, highly expressed in liver, pancreas and adipose tissue. Very low expression in skeletal muscle and heart. Detected in neutrophils.

It is found in the endoplasmic reticulum membrane. The enzyme catalyses a 1-acyl-sn-glycero-3-phosphocholine + an acyl-CoA = a 1,2-diacyl-sn-glycero-3-phosphocholine + CoA. It catalyses the reaction a 1-acyl-sn-glycero-3-phosphoethanolamine + an acyl-CoA = a 1,2-diacyl-sn-glycero-3-phosphoethanolamine + CoA. It carries out the reaction a 1-acyl-sn-glycero-3-phospho-L-serine + an acyl-CoA = a 1,2-diacyl-sn-glycero-3-phospho-L-serine + CoA. The catalysed reaction is (9Z,12Z)-octadecadienoyl-CoA + a 1-acyl-sn-glycero-3-phosphocholine = 1-acyl-2-(9Z,12Z)-octadecadienoyl-sn-glycero-3-phosphocholine + CoA. The enzyme catalyses (5Z,8Z,11Z,14Z)-eicosatetraenoyl-CoA + a 1-acyl-sn-glycero-3-phosphocholine = 1-acyl-2-(5Z,8Z,11Z,14Z-eicosatetraenoyl)-sn-glycero-3-phosphocholine + CoA. It catalyses the reaction dodecanoyl-CoA + 1-hexadecanoyl-sn-glycero-3-phosphocholine = 1-hexadecanoyl-2-dodecanoyl-sn-glycero-3-phosphocholine + CoA. It carries out the reaction octadecanoyl-CoA + 1-hexadecanoyl-sn-glycero-3-phosphocholine = 1-hexadecanoyl-2-octadecanoyl-sn-glycero-3-phosphocholine + CoA. The catalysed reaction is 1-dodecanoyl-sn-glycero-3-phosphocholine + hexadecanoyl-CoA = 1-dodecanoyl-2-hexadecanoyl-sn-glycero-3-phosphocholine + CoA. The enzyme catalyses 1-tetradecanoyl-sn-glycero-3-phosphocholine + hexadecanoyl-CoA = 1-tetradecanoyl-2-hexadecanoyl-sn-glycero-3-phosphocholine + CoA. It catalyses the reaction 1-hexadecanoyl-sn-glycero-3-phosphocholine + hexadecanoyl-CoA = 1,2-dihexadecanoyl-sn-glycero-3-phosphocholine + CoA. It carries out the reaction 1-octadecanoyl-sn-glycero-3-phosphocholine + hexadecanoyl-CoA = 1-octadecanoyl-2-hexadecanoyl-sn-glycero-3-phosphocholine + CoA. The catalysed reaction is 1-(9Z-octadecenoyl)-sn-glycero-3-phosphocholine + hexadecanoyl-CoA = 1-(9Z-octadecenoyl)-2-hexadecanoyl-sn-glycero-3-phosphocholine + CoA. The enzyme catalyses (9Z)-hexadecenoyl-CoA + 1-hexadecanoyl-sn-glycero-3-phosphocholine = 1-hexadecanoyl-2-(9Z-hexadecenoyl)-sn-glycero-3-phosphocholine + CoA. It catalyses the reaction 1-hexadecanoyl-sn-glycero-3-phosphocholine + (9Z)-octadecenoyl-CoA = 1-hexadecanoyl-2-(9Z-octadecenoyl)-sn-glycero-3-phosphocholine + CoA. It carries out the reaction (9Z,12Z)-octadecadienoyl-CoA + 1-hexadecanoyl-sn-glycero-3-phosphocholine = 1-hexadecanoyl-2-(9Z,12Z-octadecadienoyl)-sn-glycero-3-phosphocholine + CoA. The catalysed reaction is 1-dodecanoyl-sn-glycero-3-phosphocholine + (5Z,8Z,11Z,14Z)-eicosatetraenoyl-CoA = 1-dodecanoyl-2-(5Z,8Z,11Z,14Z)-eicosatetraenoyl-sn-glycero-3-phosphocholine + CoA. The enzyme catalyses (5Z,8Z,11Z,14Z)-eicosatetraenoyl-CoA + 1-hexadecanoyl-sn-glycero-3-phosphocholine = 1-hexadecanoyl-2-(5Z,8Z,11Z,14Z-eicosatetraenoyl)-sn-glycero-3-phosphocholine + CoA. It catalyses the reaction 1-octadecanoyl-sn-glycero-3-phosphocholine + (5Z,8Z,11Z,14Z)-eicosatetraenoyl-CoA = 1-octadecanoyl-2-(5Z,8Z,11Z,14Z-eicosatetraenoyl)-sn-glycero-3-phosphocholine + CoA. It carries out the reaction 1-eicosanoyl-sn-glycero-3-phosphocholine + (5Z,8Z,11Z,14Z)-eicosatetraenoyl-CoA = 1-eicosanoyl-2-(5Z,8Z,11Z,14Z)-eicosatetraenoyl-sn-glycero-3-phosphocholine + CoA. The catalysed reaction is 1-(9Z-octadecenoyl)-sn-glycero-3-phosphocholine + (9Z)-octadecenoyl-CoA = 1,2-di-(9Z-octadecenoyl)-sn-glycero-3-phosphocholine + CoA. The enzyme catalyses 1-(9Z-octadecenoyl)-sn-glycero-3-phosphocholine + (9Z,12Z)-octadecadienoyl-CoA = 1-(9Z)-octadecenoyl-2-(9Z,12Z)-octadecadienoyl-sn-glycero-3-phosphocholine + CoA. It catalyses the reaction 1-(9Z-octadecenoyl)-sn-glycero-3-phosphocholine + (5Z,8Z,11Z,14Z)-eicosatetraenoyl-CoA = 1-(9Z)-octadecenoyl-2-(5Z,8Z,11Z,14Z)-icosatetraenoyl-sn-glycero-3-phosphocholine + CoA. It carries out the reaction a 1-acyl-sn-glycero-3-phosphoethanolamine + (9Z,12Z)-octadecadienoyl-CoA = 1-acyl-2-(9Z,12Z)-octadecadienoyl-sn-glycero-3-phosphoethanolamine + CoA. The catalysed reaction is 1-(9Z-octadecenoyl)-sn-glycero-3-phosphoethanolamine + (9Z,12Z)-octadecadienoyl-CoA = 1-(9Z)-octadecenoyl-2-(9Z,12Z)-octadecadienoyl-sn-glycero-3-phosphoethanolamine + CoA. The enzyme catalyses 1-(10Z-heptadecenoyl)-sn-glycero-3-phosphoethanolamine + (9Z,12Z)-octadecadienoyl-CoA = 1-(10Z-heptadecenoyl)-2-(9Z,12Z-octadecadienoyl)-sn-glycero-3-phosphoethanolamine + CoA. It catalyses the reaction a 1-acyl-sn-glycero-3-phosphoethanolamine + (5Z,8Z,11Z,14Z)-eicosatetraenoyl-CoA = 1-acyl-2-(5Z,8Z,11Z,14Z)-eicosatetraenoyl-sn-glycero-3-phosphoethanolamine + CoA. It carries out the reaction 1-hexadecanoyl-sn-glycero-3-phosphoethanolamine + (5Z,8Z,11Z,14Z)-eicosatetraenoyl-CoA = 1-hexadecanoyl-2-(5Z,8Z,11Z,14Z-eicosatetraenoyl)-sn-glycero-3-phosphoethanolamine + CoA. The catalysed reaction is 1-(9Z-octadecenoyl)-sn-glycero-3-phosphoethanolamine + (5Z,8Z,11Z,14Z)-eicosatetraenoyl-CoA = 1-(9Z)-octadecenoyl-2-(5Z,8Z,11Z,14Z)-eicosatetraenoyl-sn-glycero-3-phosphoethanolamine + CoA. The enzyme catalyses 1-(10Z-heptadecenoyl)-sn-glycero-3-phosphoethanolamine + (5Z,8Z,11Z,14Z)-eicosatetraenoyl-CoA = 1-(10Z-heptadecenoyl)-2-(5Z,8Z,11Z,14Z-eicosatetraenoyl)-sn-glycero-3-phosphoethanolamine + CoA. It catalyses the reaction a 1-O-(1Z-alkenyl)-sn-glycero-3-phosphoethanolamine + (5Z,8Z,11Z,14Z)-eicosatetraenoyl-CoA = 1-O-(1Z)-alkenyl-2-(5Z,8Z,11Z,14Z)-eicosatetraenoyl-sn-glycero-3-phosphoethanolamine + CoA. It carries out the reaction a 1-acyl-sn-glycero-3-phospho-L-serine + (9Z,12Z)-octadecadienoyl-CoA = 1-acyl-2-(9Z,12Z-octadecadienoyl)-sn-glycero-3-phospho-L-serine + CoA. The catalysed reaction is a 1-acyl-sn-glycero-3-phospho-L-serine + (5Z,8Z,11Z,14Z)-eicosatetraenoyl-CoA = 1-acyl-2-(5Z,8Z,11Z,14Z-eicosatetraenoyl)-sn-glycero-3-phospho-L-serine + CoA. The enzyme catalyses 1-hexadecanoyl-sn-glycero-3-phospho-L-serine + (9Z)-octadecenoyl-CoA = 1-hexadecanoyl-2-(9Z-octadecenoyl)-sn-glycero-3-phospho-L-serine + CoA. It catalyses the reaction 1-(9Z-octadecenoyl)-sn-glycero-3-phospho-L-serine + (9Z)-octadecenoyl-CoA = 1,2-di-(9Z)-octadecenoyl-sn-glycero-3-phospho-L-serine + CoA. It carries out the reaction 1-hexadecanoyl-sn-glycero-3-phospho-L-serine + (9Z,12Z)-octadecadienoyl-CoA = 1-hexadecanoyl-2-(9Z,12Z-octadecadienoyl)-sn-glycero-3-phospho-L-serine + CoA. The catalysed reaction is 1-(9Z-octadecenoyl)-sn-glycero-3-phospho-L-serine + (9Z,12Z)-octadecadienoyl-CoA = 1-(9Z-octadecenoyl)-2-(9Z,12Z-octadienoyl)-sn-glycero-3-phospho-L-serine + CoA. The enzyme catalyses 1-hexadecanoyl-sn-glycero-3-phospho-L-serine + (5Z,8Z,11Z,14Z)-eicosatetraenoyl-CoA = 1-hexadecanoyl-2-(5Z,8Z,11Z,14Z-eicosatetraenoyl)-sn-glycero-3-phospho-L-serine + CoA. It catalyses the reaction 1-(9Z-octadecenoyl)-sn-glycero-3-phospho-L-serine + (5Z,8Z,11Z,14Z)-eicosatetraenoyl-CoA = 1-(9Z-octadecenoyl)-2-(5Z,8Z,11Z,14Z-eicosatetraenoyl)-sn-glycero-3-phospho-L-serine + CoA. Its pathway is lipid metabolism; phospholipid metabolism. Its activity is regulated as follows. Activity is inhibited by thimerosal. Functionally, lysophospholipid O-acyltransferase (LPLAT) that catalyzes the reacylation step of the phospholipid remodeling process also known as the Lands cycle. Catalyzes transfer of the fatty acyl chain from fatty acyl-CoA to 1-acyl lysophospholipid to form various classes of phospholipids. Converts 1-acyl lysophosphatidylcholine (LPC) into phosphatidylcholine (PC) (LPCAT activity), 1-acyl lysophosphatidylserine (LPS) into phosphatidylserine (PS) (LPSAT activity) and 1-acyl lysophosphatidylethanolamine (LPE) into phosphatidylethanolamine (PE) (LPEAT activity). Favors polyunsaturated fatty acyl-CoAs as acyl donors compared to saturated fatty acyl-CoAs. Has higher activity for LPC acyl acceptors compared to LPEs and LPSs. Can also transfer the fatty acyl chain from fatty acyl-CoA to 1-O-alkyl lysophospholipid or 1-O-alkenyl lysophospholipid with lower efficiency. Acts as a major LPC O-acyltransferase in liver and intestine. As a component of the liver X receptor/NR1H3 or NR1H2 signaling pathway, mainly catalyzes the incorporation of arachidonate into PCs of endoplasmic reticulum (ER) membranes, increasing membrane dynamics and enabling triacylglycerols transfer to nascent very low-density lipoprotein (VLDL) particles. Promotes processing of sterol regulatory protein SREBF1 in hepatocytes, likely by facilitating the translocation of SREBF1-SCAP complex from ER to the Golgi apparatus. Participates in mechanisms by which the liver X receptor/NR1H3 or NR1H2 signaling pathway counteracts lipid-induced ER stress response and inflammation. Down-regulates hepatic inflammation by limiting arachidonic acid availability for synthesis of inflammatory eicosanoids, such as prostaglandins. In enterocytes, acts as a component of a gut-brain feedback loop that coordinates dietary lipid absorption and food intake. Regulates the abundance of PCs containing linoleate and arachidonate in enterocyte membranes, enabling passive diffusion of fatty acids and cholesterol across the membrane for efficient chylomicron assembly. In the intestinal crypt, acts as a component of dietary-responsive phospholipid-cholesterol axis, regulating the biosynthesis of cholesterol and its mitogenic effects on intestinal stem cells. The sequence is that of Lysophospholipid acyltransferase 5 (LPCAT3) from Homo sapiens (Human).